A 262-amino-acid chain; its full sequence is Aminoglycoside (3'') (9) adenylyltransferase (262 aa).

The tract at residues M1 to A157 is adenylyltransferase domain. ATP-binding residues include S36, S46, and D47. Positions 47, 49, and 87 each coordinate Mg(2+). E87 serves as the catalytic Proton acceptor. Residue D130 coordinates ATP. The interval P158–T262 is helical domain. Streptomycin contacts are provided by residues W173–D178 and H185. ATP-binding residues include K205 and Y231.

Monomer.

The enzyme catalyses streptomycin + ATP = 3''-O-adenylylstreptomycin + diphosphate. It carries out the reaction spectinomycin + ATP = 9-O-adenylylspectinomycin + diphosphate. Functionally, mediates bacterial resistance to the antibiotics streptomycin and spectinomycin, does not confer resistance to kanamycin. Binds ATP first, then antibiotic. This chain is Aminoglycoside (3'') (9) adenylyltransferase (aadA), found in Salmonella typhimurium (strain LT2 / SGSC1412 / ATCC 700720).